An 860-amino-acid polypeptide reads, in one-letter code: GPI ethanolamine phosphate transferase 2 (860 aa).

2 N-linked (GlcNAc...) asparagine glycosylation sites follow: asparagine 123 and asparagine 180. 8 consecutive transmembrane segments (helical) span residues 408 to 428 (LGGI…FSAL), 438 to 458 (LYLI…TVEE), 459 to 479 (EHQI…ISGS), 487 to 506 (FNWM…NQTG), 524 to 544 (NHPV…NKVW), 555 to 575 (LAFL…ITQA), 576 to 596 (WEAG…PGTL), and 639 to 659 (AFLT…LFMV). N-linked (GlcNAc...) asparagine glycosylation is present at asparagine 672. The next 4 helical transmembrane spans lie at 692–712 (LVLV…FSMG), 736–756 (FVGV…STAG), 795–815 (VYVV…TCFF), and 834–854 (FVWT…IFVV).

This sequence belongs to the PIGG/PIGN/PIGO family. PIGG subfamily.

Its subcellular location is the endoplasmic reticulum membrane. Its pathway is glycolipid biosynthesis; glycosylphosphatidylinositol-anchor biosynthesis. Ethanolamine phosphate transferase involved in glycosylphosphatidylinositol-anchor biosynthesis. Transfers ethanolamine phosphate to the GPI second mannose. The sequence is that of GPI ethanolamine phosphate transferase 2 (LAS21) from Yarrowia lipolytica (strain CLIB 122 / E 150) (Yeast).